Consider the following 347-residue polypeptide: MLISQRPTLSEEVLTDNRSQFVIEPLEPGFGYTLGNSLRRTLLSSIPGAAVTSIRIDGVLHEFTTVPGVKEDVTAIILNLKSLVVSSEEDEPVTMYLRKQGPGEVTAGDIVPPAGVTVHNPELHIATLNDKGKLEVELVVERGRGYVPAVQNRASGAEIGRIPVDSIYSPVLKVTYKVDATRVEQRTDFDKLILDVETKSSITPRDALASAGKTLVELFGLARELNVEAEGIEIGPSPAEADHIASFALPIDDLDLTVRSYNCLKREGVHTVGELVSRTESDLLDIRNFGQKSIDEVKVKLHQLGLSLKDSPPSFDPSQVAGYDVATGTWSTEAAYDDQDYAETEQL.

An alpha N-terminal domain (alpha-NTD) region spans residues 1–226; the sequence is MLISQRPTLS…ELFGLARELN (226 aa). The alpha C-terminal domain (alpha-CTD) stretch occupies residues 241–347; it reads ADHIASFALP…DQDYAETEQL (107 aa).

The protein belongs to the RNA polymerase alpha chain family. In terms of assembly, homodimer. The RNAP catalytic core consists of 2 alpha, 1 beta, 1 beta' and 1 omega subunit. When a sigma factor is associated with the core the holoenzyme is formed, which can initiate transcription.

The catalysed reaction is RNA(n) + a ribonucleoside 5'-triphosphate = RNA(n+1) + diphosphate. In terms of biological role, DNA-dependent RNA polymerase catalyzes the transcription of DNA into RNA using the four ribonucleoside triphosphates as substrates. The polypeptide is DNA-directed RNA polymerase subunit alpha (Mycobacterium avium (strain 104)).